The sequence spans 801 residues: tRNA(Met) cytidine acetyltransferase TmcA (801 aa).

Residues glutamine 228, 256–265, and arginine 412 contribute to the ATP site; that span reads GRGKSSAVGL. In terms of domain architecture, N-acetyltransferase spans 457–637; that stretch reads EELFLKNEEE…YTVIVVKPLS (181 aa). Acetyl-CoA contacts are provided by residues 562–564, 569–575, and glutamate 602; these read IAT and MGKGLGS.

It belongs to the RNA cytidine acetyltransferase family. TmcA subfamily.

The protein resides in the cytoplasm. The catalysed reaction is cytidine(34) in elongator tRNA(Met) + acetyl-CoA + ATP + H2O = N(4)-acetylcytidine(34) in elongator tRNA(Met) + ADP + phosphate + CoA + H(+). Functionally, catalyzes the formation of N(4)-acetylcytidine (ac(4)C) at the wobble position of tRNA(Met), by using acetyl-CoA as an acetyl donor and ATP (or GTP). In Thermofilum pendens (strain DSM 2475 / Hrk 5), this protein is tRNA(Met) cytidine acetyltransferase TmcA.